The following is a 65-amino-acid chain: MKASELRAKDVAALEKEISDLLKAHFGLRMQKATQQLTNHSVIKQTRRDIARARTILTEKKKGAA.

The protein belongs to the universal ribosomal protein uL29 family.

This chain is Large ribosomal subunit protein uL29, found in Leptothrix cholodnii (strain ATCC 51168 / LMG 8142 / SP-6) (Leptothrix discophora (strain SP-6)).